The sequence spans 459 residues: Sorting nexin-8 (459 aa).

The interval 1-53 (MTGGAMDPLPTAPGAAAAEAEVDEEADPPAADSPVPPVSEPRAPDAGQMQVPP) is disordered. One can recognise a PX domain in the interval 68–176 (ARDAVQVELV…KLFLSFSGPD (109 aa)). The a 1,2-diacyl-sn-glycero-3-phospho-(1D-myo-inositol-3-phosphate) site is built by arginine 104, lysine 130, and arginine 143.

Belongs to the sorting nexin family.

It localises to the early endosome membrane. May be involved in several stages of intracellular trafficking. May play a role in intracellular protein transport from early endosomes to the trans-Golgi network. This chain is Sorting nexin-8 (SNX8), found in Bos taurus (Bovine).